A 171-amino-acid chain; its full sequence is Probable chorismate pyruvate-lyase (171 aa).

Residues Met36, Arg78, Leu116, and Glu157 each contribute to the substrate site.

It belongs to the UbiC family.

Its subcellular location is the cytoplasm. The catalysed reaction is chorismate = 4-hydroxybenzoate + pyruvate. The protein operates within cofactor biosynthesis; ubiquinone biosynthesis. Functionally, removes the pyruvyl group from chorismate, with concomitant aromatization of the ring, to provide 4-hydroxybenzoate (4HB) for the ubiquinone pathway. This is Probable chorismate pyruvate-lyase from Bartonella bacilliformis (strain ATCC 35685 / KC583 / Herrer 020/F12,63).